Consider the following 349-residue polypeptide: Cytoplasmic tRNA 2-thiolation protein 2 (349 aa).

It belongs to the CTU2/NCS2 family.

The protein localises to the cytoplasm. It participates in tRNA modification; 5-methoxycarbonylmethyl-2-thiouridine-tRNA biosynthesis. Plays a central role in 2-thiolation of mcm(5)S(2)U at tRNA wobble positions of tRNA(Lys), tRNA(Glu) and tRNA(Gln). May act by forming a heterodimer with tut-1/ctu-1 that ligates sulfur from thiocarboxylated urm-1 onto the uridine of tRNAs at wobble position. In Caenorhabditis briggsae, this protein is Cytoplasmic tRNA 2-thiolation protein 2.